A 334-amino-acid chain; its full sequence is Succinate receptor 1 (334 aa).

Residues 5-31 (MAWNATCKNWLAAEAALEKYYLSIFYG) lie on the Extracellular side of the membrane. Residue asparagine 8 is glycosylated (N-linked (GlcNAc...) asparagine). Residues 32-52 (IEFVVGVLGNTIVVYGYIFSL) traverse the membrane as a helical segment. Residues 53–59 (KNWNSSN) are Cytoplasmic-facing. Residues 60–80 (IYLFNLSVSDLAFLCTLPMLI) form a helical membrane-spanning segment. Residues 81-103 (RSYANGNWIYGDVLCISNRYVLH) lie on the Extracellular side of the membrane. Cysteine 95 and cysteine 172 are oxidised to a cystine. A helical membrane pass occupies residues 104–124 (ANLYTSILFLTFISIDRYLII). Topologically, residues 125 to 137 (KYPFREHLLQKKE) are cytoplasmic. Residues 138 to 158 (FAILISLAIWVLVTLELLPIL) form a helical membrane-spanning segment. The Extracellular segment spans residues 159–185 (PLINPVITDNGTTCNDFASSGDPNYNL). N-linked (GlcNAc...) asparagine glycosylation occurs at asparagine 168. The chain crosses the membrane as a helical span at residues 186-206 (IYSMCLTLLGFLIPLFVMCFF). The Cytoplasmic portion of the chain corresponds to 207-230 (YYKIALFLKQRNRQVATALPLEKP). The chain crosses the membrane as a helical span at residues 231 to 251 (LNLVIMAVVIFSVLFTPYHVM). Residues 252–281 (RNVRIASRLGSWKQYQCTQVVINSFYIVTR) are Extracellular-facing. The chain crosses the membrane as a helical span at residues 282–302 (PLAFLNSVINPVFYFLLGDHF). Residues 303-334 (RDMLMNQLRHNFKSLTSFSRWAHELLLSFREK) lie on the Cytoplasmic side of the membrane.

Belongs to the G-protein coupled receptor 1 family. In terms of tissue distribution, expressed specifically in kidney. Highly expressed in immature dendritic cells, expression rapidly downregulates after maturation. Also expressed in macrophages.

Its subcellular location is the cell membrane. In terms of biological role, g protein-coupled receptor for succinate able to mediate signaling through Gq/GNAQ or Gi/GNAI second messengers depending on the cell type and the processes regulated. Succinate-SUCNR1 signaling serves as a link between metabolic stress, inflammation and energy homeostasis. In macrophages, plays a range of immune-regulatory roles. During inflammation, succinate-SUCNR1 signaling may act as an anti-inflammatory mediator or boost inflammation depending on the inflammatory status of cells. Hyperpolarizes M2 macrophages versus M1 phenotype through Gq signaling by regulating the transcription of genes involved in immune function. In activated M1 macrophages, plays a pro-inflammatory role in response to LPS. Expressed in dendritic cells, where it is involved in the sensing of immunological danger and enhances immunity. Mediates succinate triggered intracelleular calcium mobilization, induces migratory responses and acts in synergy with Toll-like receptor ligands for the production of proinflammatory cytokines as well as an enhancement of antigen-specific activation of helper T cells. In the small intestine, mediates the activation of tuft cells by dietary succinate and triggers type 2 immunity. In adipocytes, plays an important role in the control of energy metabolism. In response to succinate, controls leptin expression in an AMPK-JNK-CEBPA-dependent as well as circadian clock-regulated manner. In muscle tissue, is expressed in non-muscle cells and coordinates muscle remodeling in response to the succinate produced during exercise training in a paracrine manner. In retina, acts as a mediator of vessel growth during retinal development. In response to succinate, regulates the production of angiogenic factors, including VEGF, by retinal ganglion neurons. The chain is Succinate receptor 1 from Homo sapiens (Human).